The primary structure comprises 141 residues: D-aminoacyl-tRNA deacylase (141 aa).

A Gly-cisPro motif, important for rejection of L-amino acids motif is present at residues 133–134; it reads GP.

The protein belongs to the DTD family. Homodimer.

Its subcellular location is the cytoplasm. It carries out the reaction glycyl-tRNA(Ala) + H2O = tRNA(Ala) + glycine + H(+). The catalysed reaction is a D-aminoacyl-tRNA + H2O = a tRNA + a D-alpha-amino acid + H(+). An aminoacyl-tRNA editing enzyme that deacylates mischarged D-aminoacyl-tRNAs. Also deacylates mischarged glycyl-tRNA(Ala), protecting cells against glycine mischarging by AlaRS. Acts via tRNA-based rather than protein-based catalysis; rejects L-amino acids rather than detecting D-amino acids in the active site. By recycling D-aminoacyl-tRNA to D-amino acids and free tRNA molecules, this enzyme counteracts the toxicity associated with the formation of D-aminoacyl-tRNA entities in vivo and helps enforce protein L-homochirality. This is D-aminoacyl-tRNA deacylase from Nautilia profundicola (strain ATCC BAA-1463 / DSM 18972 / AmH).